Reading from the N-terminus, the 869-residue chain is Leucine--tRNA ligase (869 aa).

A 'HIGH' region motif is present at residues 42 to 52; it reads PYPSGRLHMGH. A 'KMSKS' region motif is present at residues 620–624; that stretch reads KMSKS. K623 is an ATP binding site.

This sequence belongs to the class-I aminoacyl-tRNA synthetase family.

The protein resides in the cytoplasm. It carries out the reaction tRNA(Leu) + L-leucine + ATP = L-leucyl-tRNA(Leu) + AMP + diphosphate. The chain is Leucine--tRNA ligase from Hamiltonella defensa subsp. Acyrthosiphon pisum (strain 5AT).